Reading from the N-terminus, the 400-residue chain is 1-deoxy-D-xylulose 5-phosphate reductoisomerase (400 aa).

Positions 17, 18, 19, 20, and 131 each coordinate NADPH. Lys-132 contacts 1-deoxy-D-xylulose 5-phosphate. Residue Glu-133 participates in NADPH binding. Asp-157 contributes to the Mn(2+) binding site. Residues Ser-158, Glu-159, Ser-188, and His-211 each coordinate 1-deoxy-D-xylulose 5-phosphate. A Mn(2+)-binding site is contributed by Glu-159. Gly-217 lines the NADPH pocket. 1-deoxy-D-xylulose 5-phosphate-binding residues include Ser-224, Asn-229, Lys-230, and Glu-233. Glu-233 contacts Mn(2+).

It belongs to the DXR family. Requires Mg(2+) as cofactor. The cofactor is Mn(2+).

It carries out the reaction 2-C-methyl-D-erythritol 4-phosphate + NADP(+) = 1-deoxy-D-xylulose 5-phosphate + NADPH + H(+). It participates in isoprenoid biosynthesis; isopentenyl diphosphate biosynthesis via DXP pathway; isopentenyl diphosphate from 1-deoxy-D-xylulose 5-phosphate: step 1/6. Functionally, catalyzes the NADPH-dependent rearrangement and reduction of 1-deoxy-D-xylulose-5-phosphate (DXP) to 2-C-methyl-D-erythritol 4-phosphate (MEP). This is 1-deoxy-D-xylulose 5-phosphate reductoisomerase from Pseudomonas putida (strain ATCC 700007 / DSM 6899 / JCM 31910 / BCRC 17059 / LMG 24140 / F1).